A 220-amino-acid polypeptide reads, in one-letter code: Zinc-finger homeodomain protein 2 (220 aa).

Acidic residues predominate over residues 1 to 11 (MNFEDQEEDME). Residues 1 to 40 (MNFEDQEEDMEMSGVNPPCGYDSLSGEGATSSGGGGVGRS) are disordered. Residues 31 to 40 (SSGGGGVGRS) show a composition bias toward gly residues. The segment at 49–98 (YRECLKNHAVNIGGHAVDGCCEFMPSGEDGTLDALKCAACGCHRNFHRKE) adopts a ZF-HD dimerization-type zinc-finger fold. The interval 100–160 (ESIGGRAHRV…SSSGGTTKRF (61 aa)) is disordered. Residues 157 to 220 (TKRFRTKFTA…NNKNSLGKKP (64 aa)) constitute a DNA-binding region (homeobox; atypical).

As to quaternary structure, homo or heterodimer. Interacts with ZHD1, ZHD3, ZHD4, ZHD5, ZHD6, ZHD7, ZHD8, ZHD9, ZHD10 and ZHD11. As to expression, mostly expressed in flowers and, to a lower extent, in inflorescence, stems and leaves.

The protein localises to the nucleus. Its function is as follows. Essential protein. Putative transcription factor. In Arabidopsis thaliana (Mouse-ear cress), this protein is Zinc-finger homeodomain protein 2 (ZHD1).